An 88-amino-acid polypeptide reads, in one-letter code: Protein MATERNALLY EXPRESSED GENE 1 (88 aa).

An N-terminal signal peptide occupies residues Met1–Gly27. Asn36 carries N-linked (GlcNAc...) asparagine glycosylation. Disulfide bonds link Cys65–Cys87 and Cys68–Cys76.

It belongs to the MEG family. In terms of processing, glycosylated. Expressed exclusively in endosperm. Found in basal endosperm transfer cells.

The protein resides in the secreted. It is found in the cell wall. Its subcellular location is the cell membrane. It localises to the extracellular space. The protein localises to the extracellular matrix. Functionally, regulates maternal nutrient uptake, sucrose partitioning, and seed biomass yield. Necessary and sufficient for the establishment and differentiation of the endosperm nutrient transfer cells located at the mother:seed interface. Exclusive expression of the maternal allele at the early stages of endosperm development. The maternal allele is hypomethylated. At later stages, expression becomes biallelic. Regulated by the transcription factor MRP1. The sequence is that of Protein MATERNALLY EXPRESSED GENE 1 (MEG1) from Zea mays (Maize).